Consider the following 319-residue polypeptide: NADH-cytochrome b5 reductase 2 (319 aa).

Residues 30–46 (LAPVYLTVGLAGLGVGL) traverse the membrane as a helical segment. The FAD-binding FR-type domain maps to 69 to 173 (QGWVDLKLSE…KGPLPKYPWE (105 aa)). An FAD-binding site is contributed by 176–211 (KHQHICLIAGGTGITPMYQLARHIFKNPEDKTKVTL).

It belongs to the flavoprotein pyridine nucleotide cytochrome reductase family. FAD serves as cofactor.

The protein resides in the mitochondrion outer membrane. The catalysed reaction is 2 Fe(III)-[cytochrome b5] + NADH = 2 Fe(II)-[cytochrome b5] + NAD(+) + H(+). Functionally, may mediate the reduction of outer membrane cytochrome b5. The chain is NADH-cytochrome b5 reductase 2 (mcr1) from Aspergillus terreus (strain NIH 2624 / FGSC A1156).